The following is a 286-amino-acid chain: Glycine--tRNA ligase alpha subunit (286 aa).

It belongs to the class-II aminoacyl-tRNA synthetase family. As to quaternary structure, tetramer of two alpha and two beta subunits.

The protein localises to the cytoplasm. The enzyme catalyses tRNA(Gly) + glycine + ATP = glycyl-tRNA(Gly) + AMP + diphosphate. This is Glycine--tRNA ligase alpha subunit from Thermotoga neapolitana (strain ATCC 49049 / DSM 4359 / NBRC 107923 / NS-E).